Consider the following 515-residue polypeptide: MEDKLILDLCLSALFVVVLSKLVSSAMKPRLNLPPGPWTLPLIGSLHHLVMTKSPQTHRSLRALSEKHGPIMQLWMGEVPAVVVSSPAVAEEVLKHQDLRFADRHLTATTEEVFFGGRDVIFGPYSERWRHLRKICMQELLTAARVRSFQGVREREVARLVRELAADAGAGGDAGVNLNERISKLANDIVMVSSVGGRCSHRDEFLDALEVAKKQITWLSVADLFPSSKLARMVAVAPRKGLASRKRMELVIRRIIQERKDQLMDDSAAGAGEAAAGKDCFLDVLLRLQKEGGTPVPVTDEIIVVLLFDMISGASETSPTVLIWTLAELMRNPRIMAKAQAEVRQAVAGKTTITEDDIVGLSYLKMVIKETLRLHPPAPLLNPRKCRETSQVMGYDIPKGTSVFVNMWAICRDSRYWEDPEEYKPERFENNSVDYKGNNFEFLPFGSGRRICPGINLGVANLELPLASLLYHFDWKLPNGMAPKDLDMHETSGMVAAKLITLNICPITHIAPSSA.

The helical transmembrane segment at 5–25 threads the bilayer; it reads LILDLCLSALFVVVLSKLVSS. Cysteine 452 contributes to the heme binding site.

This sequence belongs to the cytochrome P450 family. Requires heme as cofactor.

The protein localises to the membrane. The enzyme catalyses ent-isokaurene + 2 reduced [NADPH--hemoprotein reductase] + 2 O2 = ent-isokaurene-2beta,3beta-diol + 2 oxidized [NADPH--hemoprotein reductase] + 2 H2O + 2 H(+). Enzyme of the diterpenoid metabolism involved in the biosynthesis of antibacterial oryzalides such as phytocassane. The chain is Ent-isokaurene C2/C3-hydroxylase (CYP71Z6) from Oryza sativa subsp. japonica (Rice).